Consider the following 950-residue polypeptide: Xylosyltransferase 1 (950 aa).

The Cytoplasmic segment spans residues 1–17 (MVAAPSARRLVRRSHSA). The chain crosses the membrane as a helical; Signal-anchor for type II membrane protein span at residues 18–38 (LLAALTVLLLQTLVGWNFSSL). The Lumenal portion of the chain corresponds to 39–950 (HSGAGERRGG…GAVKPDGRLR (912 aa)). Residues 42–246 (AGERRGGAAA…ELRYDQPPKC (205 aa)) form a disordered region. Residues 91-104 (PPARARARALAGCP) show a composition bias toward low complexity. A compositionally biased stretch (basic and acidic residues) spans 134 to 150 (KVRTDSNNENSVPKDFE). A compositionally biased stretch (polar residues) spans 152–161 (VDNSNFAPRT). Positions 166-193 (HQPELAKKPPSRQKELLKRRLEQEEKGK) are enriched in basic and acidic residues. Asparagine 215 carries N-linked (GlcNAc...) asparagine glycosylation. Intrachain disulfides connect cysteine 246-cysteine 274, cysteine 290-cysteine 531, cysteine 550-cysteine 563, and cysteine 552-cysteine 561. UDP-alpha-D-xylose is bound by residues valine 322, aspartate 350, and 379–381 (TIW). The N-linked (GlcNAc...) asparagine glycan is linked to asparagine 410. 483-484 (DW) is a binding site for UDP-alpha-D-xylose. UDP-alpha-D-xylose is bound by residues serine 564 and 587-588 (RK). Cystine bridges form between cysteine 664-cysteine 918 and cysteine 911-cysteine 924. An N-linked (GlcNAc...) asparagine glycan is attached at asparagine 768. The disordered stretch occupies residues 931 to 950 (SFSPDPKSELGAVKPDGRLR).

It belongs to the glycosyltransferase 14 family. XylT subfamily. In terms of assembly, monomer. A divalent metal cation serves as cofactor. Post-translationally, contains 7 disulfide bonds. In terms of processing, N-glycosylated.

It localises to the golgi apparatus membrane. The catalysed reaction is UDP-alpha-D-xylose + L-seryl-[protein] = 3-O-(beta-D-xylosyl)-L-seryl-[protein] + UDP + H(+). Its pathway is glycan metabolism; chondroitin sulfate biosynthesis. It participates in glycan metabolism; heparan sulfate biosynthesis. Catalyzes the first step in the biosynthesis of chondroitin sulfate and dermatan sulfate proteoglycans, such as DCN. Transfers D-xylose from UDP-D-xylose to specific serine residues of the core protein. Required for normal maturation of chondrocytes during bone development, normal onset of ossification and normal embryonic and postnatal skeleton development, especially of the long bones. This chain is Xylosyltransferase 1 (XYLT1), found in Canis lupus familiaris (Dog).